Here is a 432-residue protein sequence, read N- to C-terminus: Serine--tRNA ligase (432 aa).

238–240 (TAE) contacts L-serine. Position 269 to 271 (269 to 271 (RSE)) interacts with ATP. Glu292 lines the L-serine pocket. 357 to 360 (EISS) contributes to the ATP binding site. Residue Ser393 participates in L-serine binding.

This sequence belongs to the class-II aminoacyl-tRNA synthetase family. Type-1 seryl-tRNA synthetase subfamily. In terms of assembly, homodimer. The tRNA molecule binds across the dimer.

It is found in the cytoplasm. It catalyses the reaction tRNA(Ser) + L-serine + ATP = L-seryl-tRNA(Ser) + AMP + diphosphate + H(+). The enzyme catalyses tRNA(Sec) + L-serine + ATP = L-seryl-tRNA(Sec) + AMP + diphosphate + H(+). Its pathway is aminoacyl-tRNA biosynthesis; selenocysteinyl-tRNA(Sec) biosynthesis; L-seryl-tRNA(Sec) from L-serine and tRNA(Sec): step 1/1. Functionally, catalyzes the attachment of serine to tRNA(Ser). Is also able to aminoacylate tRNA(Sec) with serine, to form the misacylated tRNA L-seryl-tRNA(Sec), which will be further converted into selenocysteinyl-tRNA(Sec). This chain is Serine--tRNA ligase, found in Hyphomonas neptunium (strain ATCC 15444).